The following is a 458-amino-acid chain: Adenylosuccinate synthetase (458 aa).

GTP contacts are provided by residues 17 to 23 and 45 to 47; these read GDEGKGK and GHT. Residue Asp-18 is the Proton acceptor of the active site. Mg(2+) is bound by residues Asp-18 and Gly-45. IMP contacts are provided by residues 18–21, 43–46, Thr-137, Arg-151, Gln-247, Thr-262, and Arg-330; these read DEGK and NAGH. Catalysis depends on His-46, which acts as the Proton donor. Residue 326 to 332 participates in substrate binding; that stretch reads VTTGRSR. Residues Arg-332, 358–360, and 440–442 contribute to the GTP site; these read KLD and STG.

It belongs to the adenylosuccinate synthetase family. As to quaternary structure, homodimer. It depends on Mg(2+) as a cofactor.

Its subcellular location is the cytoplasm. It catalyses the reaction IMP + L-aspartate + GTP = N(6)-(1,2-dicarboxyethyl)-AMP + GDP + phosphate + 2 H(+). Its pathway is purine metabolism; AMP biosynthesis via de novo pathway; AMP from IMP: step 1/2. In terms of biological role, plays an important role in the de novo pathway of purine nucleotide biosynthesis. Catalyzes the first committed step in the biosynthesis of AMP from IMP. This is Adenylosuccinate synthetase from Albidiferax ferrireducens (strain ATCC BAA-621 / DSM 15236 / T118) (Rhodoferax ferrireducens).